The chain runs to 425 residues: L-cysteine:1D-myo-inositol 2-amino-2-deoxy-alpha-D-glucopyranoside ligase (425 aa).

Cysteine 43 contacts Zn(2+). L-cysteinyl-5'-AMP is bound by residues cysteine 43 to threonine 46, threonine 58, and asparagine 81 to threonine 83. The short motif at isoleucine 45–histidine 55 is the 'HIGH' region element. The 'ERGGDP' region motif lies at glutamate 195–proline 200. Tryptophan 236 is a binding site for L-cysteinyl-5'-AMP. Residue cysteine 240 participates in Zn(2+) binding. Glycine 258–aspartate 260 contacts L-cysteinyl-5'-AMP. Residue histidine 265 participates in Zn(2+) binding. An L-cysteinyl-5'-AMP-binding site is contributed by valine 295. The short motif at lysine 301–serine 305 is the 'KMSKS' region element.

Belongs to the class-I aminoacyl-tRNA synthetase family. MshC subfamily. As to quaternary structure, monomer. Requires Zn(2+) as cofactor.

It catalyses the reaction 1D-myo-inositol 2-amino-2-deoxy-alpha-D-glucopyranoside + L-cysteine + ATP = 1D-myo-inositol 2-(L-cysteinylamino)-2-deoxy-alpha-D-glucopyranoside + AMP + diphosphate + H(+). Functionally, catalyzes the ATP-dependent condensation of GlcN-Ins and L-cysteine to form L-Cys-GlcN-Ins. The sequence is that of L-cysteine:1D-myo-inositol 2-amino-2-deoxy-alpha-D-glucopyranoside ligase from Sanguibacter keddieii (strain ATCC 51767 / DSM 10542 / NCFB 3025 / ST-74).